Here is a 146-residue protein sequence, read N- to C-terminus: Cytochrome c oxidase subunit 5A, mitochondrial (146 aa).

Residues 1 to 37 (MLAAALRRCTAAAAARGLLHPASAPSPAAAVCSIRCY) constitute a mitochondrion transit peptide. The SIFI-degron signature appears at 2 to 16 (LAAALRRCTAAAAAR). N6-acetyllysine occurs at positions 83 and 109. T137 carries the post-translational modification Phosphothreonine.

Belongs to the cytochrome c oxidase subunit 5A family. Component of the cytochrome c oxidase (complex IV, CIV), a multisubunit enzyme composed of 14 subunits. The complex is composed of a catalytic core of 3 subunits MT-CO1, MT-CO2 and MT-CO3, encoded in the mitochondrial DNA, and 11 supernumerary subunits COX4I, COX5A, COX5B, COX6A, COX6B, COX6C, COX7A, COX7B, COX7C, COX8 and NDUFA4, which are encoded in the nuclear genome. The complex exists as a monomer or a dimer and forms supercomplexes (SCs) in the inner mitochondrial membrane with NADH-ubiquinone oxidoreductase (complex I, CI) and ubiquinol-cytochrome c oxidoreductase (cytochrome b-c1 complex, complex III, CIII), resulting in different assemblies (supercomplex SCI(1)III(2)IV(1) and megacomplex MCI(2)III(2)IV(2)). Interacts with AFG1L. Interacts with RAB5IF. In response to mitochondrial stress, the precursor protein is ubiquitinated by the SIFI complex in the cytoplasm before mitochondrial import, leading to its degradation. Within the SIFI complex, UBR4 initiates ubiquitin chain that are further elongated or branched by KCMF1.

The protein resides in the mitochondrion inner membrane. The protein operates within energy metabolism; oxidative phosphorylation. Component of the cytochrome c oxidase, the last enzyme in the mitochondrial electron transport chain which drives oxidative phosphorylation. The respiratory chain contains 3 multisubunit complexes succinate dehydrogenase (complex II, CII), ubiquinol-cytochrome c oxidoreductase (cytochrome b-c1 complex, complex III, CIII) and cytochrome c oxidase (complex IV, CIV), that cooperate to transfer electrons derived from NADH and succinate to molecular oxygen, creating an electrochemical gradient over the inner membrane that drives transmembrane transport and the ATP synthase. Cytochrome c oxidase is the component of the respiratory chain that catalyzes the reduction of oxygen to water. Electrons originating from reduced cytochrome c in the intermembrane space (IMS) are transferred via the dinuclear copper A center (CU(A)) of subunit 2 and heme A of subunit 1 to the active site in subunit 1, a binuclear center (BNC) formed by heme A3 and copper B (CU(B)). The BNC reduces molecular oxygen to 2 water molecules using 4 electrons from cytochrome c in the IMS and 4 protons from the mitochondrial matrix. This Mus musculus (Mouse) protein is Cytochrome c oxidase subunit 5A, mitochondrial (Cox5a).